A 290-amino-acid polypeptide reads, in one-letter code: Lipoyl synthase 2 (290 aa).

[4Fe-4S] cluster contacts are provided by Cys-37, Cys-42, Cys-48, Cys-63, Cys-67, Cys-70, and Ser-283. The 224-residue stretch at 49–272 (YGQKTATFLL…GNIARELGFS (224 aa)) folds into the Radical SAM core domain.

It belongs to the radical SAM superfamily. Lipoyl synthase family. The cofactor is [4Fe-4S] cluster.

The protein localises to the cytoplasm. The enzyme catalyses [[Fe-S] cluster scaffold protein carrying a second [4Fe-4S](2+) cluster] + N(6)-octanoyl-L-lysyl-[protein] + 2 oxidized [2Fe-2S]-[ferredoxin] + 2 S-adenosyl-L-methionine + 4 H(+) = [[Fe-S] cluster scaffold protein] + N(6)-[(R)-dihydrolipoyl]-L-lysyl-[protein] + 4 Fe(3+) + 2 hydrogen sulfide + 2 5'-deoxyadenosine + 2 L-methionine + 2 reduced [2Fe-2S]-[ferredoxin]. It participates in protein modification; protein lipoylation via endogenous pathway; protein N(6)-(lipoyl)lysine from octanoyl-[acyl-carrier-protein]: step 2/2. Its function is as follows. Catalyzes the radical-mediated insertion of two sulfur atoms into the C-6 and C-8 positions of the octanoyl moiety bound to the lipoyl domains of lipoate-dependent enzymes, thereby converting the octanoylated domains into lipoylated derivatives. This is Lipoyl synthase 2 from Thermosynechococcus vestitus (strain NIES-2133 / IAM M-273 / BP-1).